Here is a 330-residue protein sequence, read N- to C-terminus: ATP-dependent Clp protease proteolytic subunit-related protein 3, chloroplastic (330 aa).

The transit peptide at 1 to 43 (MASCLQASMNSLLPRSSSFSPHPPLSSNSSGRRNLKTFRYAFR) directs the protein to the chloroplast. The disordered stretch occupies residues 7 to 32 (ASMNSLLPRSSSFSPHPPLSSNSSGR). Positions 8-30 (SMNSLLPRSSSFSPHPPLSSNSS) are enriched in low complexity.

This sequence belongs to the peptidase S14 family. In terms of assembly, component of the chloroplastic Clp protease core complex which consist of at least 16 proteins: CLPP4 (3 copies), CLPP5 (3 copies), CLPR4 (2 copies), ClpP1 (1 copy), CLPP6 (1 copy), CLPR2 (1 copy), CLPT1 (1 copy), CLPT2 (1 copy) and 3 copies of CLPP3 and/or CLPR1 and/or CLPR3. The core complex is organized in two heptameric rings, one containing CLPP3,4,5,6 in a 1:2:3:1 ratio and the other CLPP1 and CLPR1,2,3,4 in a 3:1:1:1:1 ratio.

The protein resides in the plastid. The protein localises to the chloroplast. This is ATP-dependent Clp protease proteolytic subunit-related protein 3, chloroplastic from Arabidopsis thaliana (Mouse-ear cress).